A 114-amino-acid chain; its full sequence is ATP synthase subunit c (114 aa).

Transmembrane regions (helical) follow at residues 31-51 (AVFY…AAGG) and 88-108 (IETF…TGIF).

It belongs to the ATPase C chain family. F-type ATPases have 2 components, F(1) - the catalytic core - and F(0) - the membrane proton channel. F(1) has five subunits: alpha(3), beta(3), gamma(1), delta(1), epsilon(1). F(0) has three main subunits: a(1), b(2) and c(10-14). The alpha and beta chains form an alternating ring which encloses part of the gamma chain. F(1) is attached to F(0) by a central stalk formed by the gamma and epsilon chains, while a peripheral stalk is formed by the delta and b chains.

The protein localises to the cell inner membrane. Its function is as follows. F(1)F(0) ATP synthase produces ATP from ADP in the presence of a proton or sodium gradient. F-type ATPases consist of two structural domains, F(1) containing the extramembraneous catalytic core and F(0) containing the membrane proton channel, linked together by a central stalk and a peripheral stalk. During catalysis, ATP synthesis in the catalytic domain of F(1) is coupled via a rotary mechanism of the central stalk subunits to proton translocation. In terms of biological role, key component of the F(0) channel; it plays a direct role in translocation across the membrane. A homomeric c-ring of between 10-14 subunits forms the central stalk rotor element with the F(1) delta and epsilon subunits. This chain is ATP synthase subunit c, found in Sulfurihydrogenibium sp. (strain YO3AOP1).